Here is a 204-residue protein sequence, read N- to C-terminus: Large ribosomal subunit protein eL15 (204 aa).

A disordered region spans residues 155-204 (VHKHREQRGLTSAGRKSRGLGKGWRFSATRGGSQAKNWKRKNTKVFHRKR). The span at 191–204 (NWKRKNTKVFHRKR) shows a compositional bias: basic residues.

Belongs to the eukaryotic ribosomal protein eL15 family.

The protein is Large ribosomal subunit protein eL15 (rpl-15) of Caenorhabditis elegans.